The following is a 163-amino-acid chain: Ureidoglycolate lyase (163 aa).

Belongs to the ureidoglycolate lyase family. As to quaternary structure, homodimer. Ni(2+) is required as a cofactor.

It catalyses the reaction (S)-ureidoglycolate = urea + glyoxylate. It functions in the pathway nitrogen metabolism; (S)-allantoin degradation. In terms of biological role, catalyzes the catabolism of the allantoin degradation intermediate (S)-ureidoglycolate, generating urea and glyoxylate. Involved in the utilization of allantoin as nitrogen source. This is Ureidoglycolate lyase from Mesorhizobium japonicum (strain LMG 29417 / CECT 9101 / MAFF 303099) (Mesorhizobium loti (strain MAFF 303099)).